Here is a 316-residue protein sequence, read N- to C-terminus: N-acetyl-gamma-glutamyl-phosphate reductase (316 aa).

The active site involves C136.

The protein belongs to the NAGSA dehydrogenase family. Type 1 subfamily.

It is found in the cytoplasm. It carries out the reaction N-acetyl-L-glutamate 5-semialdehyde + phosphate + NADP(+) = N-acetyl-L-glutamyl 5-phosphate + NADPH + H(+). It participates in amino-acid biosynthesis; L-arginine biosynthesis; N(2)-acetyl-L-ornithine from L-glutamate: step 3/4. In terms of biological role, catalyzes the NADPH-dependent reduction of N-acetyl-5-glutamyl phosphate to yield N-acetyl-L-glutamate 5-semialdehyde. The sequence is that of N-acetyl-gamma-glutamyl-phosphate reductase from Xanthomonas oryzae pv. oryzae (strain MAFF 311018).